Here is a 62-residue protein sequence, read N- to C-terminus: Conotoxin Cal12.2e (62 aa).

Positions 1–19 (MKLTCVLVVLLLVLPFGDL) are cleaved as a signal peptide.

This sequence belongs to the conotoxin O1 superfamily. In terms of processing, contains 4 disulfide bonds. Expressed by the venom duct.

It localises to the secreted. Functionally, probable neurotoxin. This chain is Conotoxin Cal12.2e, found in Californiconus californicus (California cone).